The primary structure comprises 107 residues: Magnetosome protein MmsF (107 aa).

The Cytoplasmic segment spans residues 1 to 13; it reads MTEAILRSTLGAR. Residues 14-34 form a helical membrane-spanning segment; it reads TTVMAALSYLSVLCFVPLLVD. Topologically, residues 35 to 46 are lumenal; that stretch reads RDDEFVYFHAKQ. A helical transmembrane segment spans residues 47 to 67; it reads GLVIWMWGVLALFALHVPVLG. At 68-69 the chain is on the cytoplasmic side; that stretch reads KW. Residues 70–90 form a helical membrane-spanning segment; it reads IFGFSSMGVLVFSLLGLVSVV. The Lumenal segment spans residues 91–107; sequence FQRAWKLPLISWVAHRI.

This sequence belongs to the magnetosome MamF/MmsF protein family. May oligomerize.

It is found in the magnetosome membrane. With respect to regulation, its function may be negatively regulated by one of the MamGFDC proteins. Functionally, plays a major role in synthesis of cubooctahedral magnetite crystals by controlling crystal growth and morphology after nucleation. Has a partially redundant function with MamF. When overexpressed in E.coli the soluble protein self assembles into shells of about 36 nm. This protein mediates the formation of magnetite nanoparticles from a solution of Fe(2+) and Fe(3+) sulfate; the crystals are larger and lack alternative iron oxide/oxyhydroxide species seen in the protein's absence. The sequence is that of Magnetosome protein MmsF from Paramagnetospirillum magneticum (strain ATCC 700264 / AMB-1) (Magnetospirillum magneticum).